The chain runs to 281 residues: Bifunctional protein FolD 1 (281 aa).

Residues Gly165–Ser167, Ser190, and Ile231 contribute to the NADP(+) site.

This sequence belongs to the tetrahydrofolate dehydrogenase/cyclohydrolase family. As to quaternary structure, homodimer.

The catalysed reaction is (6R)-5,10-methylene-5,6,7,8-tetrahydrofolate + NADP(+) = (6R)-5,10-methenyltetrahydrofolate + NADPH. It catalyses the reaction (6R)-5,10-methenyltetrahydrofolate + H2O = (6R)-10-formyltetrahydrofolate + H(+). Its pathway is one-carbon metabolism; tetrahydrofolate interconversion. In terms of biological role, catalyzes the oxidation of 5,10-methylenetetrahydrofolate to 5,10-methenyltetrahydrofolate and then the hydrolysis of 5,10-methenyltetrahydrofolate to 10-formyltetrahydrofolate. This Desulfitobacterium hafniense (strain Y51) protein is Bifunctional protein FolD 1.